The primary structure comprises 294 residues: Aquaporin NIP2-2 (294 aa).

The next 2 helical transmembrane spans lie at valine 54 to isoleucine 74 and serine 88 to alanine 108. The NPA 1 signature appears at asparagine 111–alanine 113. 3 helical membrane-spanning segments follow: residues valine 129–leucine 151, alanine 169–threonine 189, and leucine 197–serine 217. The NPA 2 signature appears at asparagine 222–alanine 224. The chain crosses the membrane as a helical span at residues valine 235–tryptophan 255.

This sequence belongs to the MIP/aquaporin (TC 1.A.8) family. NIP (TC 1.A.8.12) subfamily.

It is found in the membrane. Functionally, aquaporins facilitate the transport of water and small neutral solutes across cell membranes. The sequence is that of Aquaporin NIP2-2 (NIP2-2) from Zea mays (Maize).